Consider the following 544-residue polypeptide: CTP synthase (544 aa).

The interval 1 to 265 (MTKFIFVTGG…DNIITEQLQL (265 aa)) is amidoligase domain. CTP is bound at residue serine 13. UTP is bound at residue serine 13. Residues 14–19 (SLGKGI) and aspartate 71 each bind ATP. Positions 71 and 139 each coordinate Mg(2+). CTP contacts are provided by residues 146-148 (DIE), 186-191 (KTKPTQ), and lysine 222. Residues 186 to 191 (KTKPTQ) and lysine 222 each bind UTP. The 255-residue stretch at 290-544 (KIAMVGKYVD…VKAALNNKKA (255 aa)) folds into the Glutamine amidotransferase type-1 domain. Residue glycine 353 coordinates L-glutamine. Cysteine 380 serves as the catalytic Nucleophile; for glutamine hydrolysis. Residues 381-384 (LGMQ), glutamate 404, and arginine 471 each bind L-glutamine. Active-site residues include histidine 517 and glutamate 519.

Belongs to the CTP synthase family. As to quaternary structure, homotetramer.

The catalysed reaction is UTP + L-glutamine + ATP + H2O = CTP + L-glutamate + ADP + phosphate + 2 H(+). It carries out the reaction L-glutamine + H2O = L-glutamate + NH4(+). The enzyme catalyses UTP + NH4(+) + ATP = CTP + ADP + phosphate + 2 H(+). It functions in the pathway pyrimidine metabolism; CTP biosynthesis via de novo pathway; CTP from UDP: step 2/2. With respect to regulation, allosterically activated by GTP, when glutamine is the substrate; GTP has no effect on the reaction when ammonia is the substrate. The allosteric effector GTP functions by stabilizing the protein conformation that binds the tetrahedral intermediate(s) formed during glutamine hydrolysis. Inhibited by the product CTP, via allosteric rather than competitive inhibition. Functionally, catalyzes the ATP-dependent amination of UTP to CTP with either L-glutamine or ammonia as the source of nitrogen. Regulates intracellular CTP levels through interactions with the four ribonucleotide triphosphates. The protein is CTP synthase of Neisseria meningitidis serogroup C (strain 053442).